Here is a 37-residue protein sequence, read N- to C-terminus: Kappa-actitoxin-Bgr1a (37 aa).

In terms of domain architecture, ShKT spans 2 to 37 (CRDWFKETACRHAKSLGNCRTSQKYRANCAKTCELC). Intrachain disulfides connect Cys2-Cys37, Cys11-Cys30, and Cys20-Cys34. The crucial for binding to potassium channels stretch occupies residues 25–26 (KY).

This sequence belongs to the sea anemone type 1 potassium channel toxin family. Type 1b subfamily.

Its subcellular location is the secreted. The protein resides in the nematocyst. Functionally, inhibits voltage-dependent potassium channels of the Kv1 family (Kv1.1/KCNA1 (Kd=6 nM), Kv1.2/KCNA2 (Kd=15 nM), Kv1.3/KCNA3 (Kd=10-39 nM), Kv1.6/KCNA6, and KCa3.1/KCNN4 (Kd=172 nM)). This is Kappa-actitoxin-Bgr1a from Bunodosoma granuliferum (Red warty sea anemone).